A 31-amino-acid polypeptide reads, in one-letter code: GSVPCGESCVWIPCITSIAGCSCSNKVCYMD.

Residues 1-31 (GSVPCGESCVWIPCITSIAGCSCSNKVCYMD) constitute a cross-link (cyclopeptide (Gly-Asp)). Cystine bridges form between Cys-5/Cys-21, Cys-9/Cys-23, and Cys-14/Cys-28.

In terms of processing, this is a cyclic peptide. In terms of tissue distribution, detected in seeds (at protein level).

In terms of biological role, probably participates in a plant defense mechanism. The sequence is that of Cyclotide hyen-J from Pigea enneasperma (Spade flower).